Reading from the N-terminus, the 205-residue chain is Lymphotoxin-alpha (205 aa).

An N-terminal signal peptide occupies residues 1 to 34 (MTPPERLFLSRVRGTPLHLLLLGLLLVLLPGAQG). O-linked (GalNAc...) threonine glycosylation occurs at Thr41. The THD domain occupies 63–205 (PAAHLIGDPS…STVFFGAFAL (143 aa)). An N-linked (GlcNAc...) asparagine glycan is attached at Asn96.

It belongs to the tumor necrosis factor family. As to quaternary structure, homotrimer, and heterotrimer of either two LTB and one LTA subunits or (less prevalent) two LTA and one LTB subunits. Interacts with TNFRSF14.

It localises to the secreted. It is found in the membrane. Its function is as follows. Cytokine that in its homotrimeric form binds to TNFRSF1A/TNFR1, TNFRSF1B/TNFBR and TNFRSF14/HVEM. In its heterotrimeric form with LTB binds to TNFRSF3/LTBR. Lymphotoxin is produced by lymphocytes and is cytotoxic for a wide range of tumor cells in vitro and in vivo. In Macaca mulatta (Rhesus macaque), this protein is Lymphotoxin-alpha (LTA).